The sequence spans 406 residues: Peptidyl-alpha-hydroxyglycine alpha-amidating lyase 2 (406 aa).

A signal peptide spans Met1–Ser19. NHL repeat units follow at residues Gly168–Phe209, Gly218–Ala261, Leu264–Gly308, and Asp358–Lys402. Cystine bridges form between Cys231/Cys251 and Cys293/Cys304.

This sequence belongs to the peptidyl-alpha-hydroxyglycine alpha-amidating lyase family. The cofactor is Zn(2+). In terms of processing, N-glycosylated. As to expression, only found in a subset of neurons distributed throughout all levels of the central nervous system (CNS). Present in at least some neuroendocrine cells. In adult brains, it is only present in a small handful of cells, the majority of which being distributed in distal parts of the medulla, with a higher expression in the posterior surface of the brain (at protein level).

The protein resides in the secreted. It carries out the reaction a [peptide]-C-terminal (2S)-2-hydroxyglycine = a [peptide]-C-terminal amide + glyoxylate. Peptidyl-alpha-hydroxylglycine alpha-amidating lyase that catalyzes an essential reaction in C-terminal alpha-amidation of peptides. Mediates the dismutation of the unstable peptidyl(2-hydroxyglycine) intermediate to glyoxylate and the corresponding desglycine peptide amide. C-terminal amidation of peptides such as neuropeptides is essential for full biological activity. This is Peptidyl-alpha-hydroxyglycine alpha-amidating lyase 2 (Pal2) from Drosophila melanogaster (Fruit fly).